The primary structure comprises 92 residues: uncharacterized protein (92 aa).

The segment at 25 to 53 is disordered; the sequence is AGRGVRREARDTPCRGTAEGLATSQPEDG.

This is an uncharacterized protein from Treponema pallidum (strain Nichols).